Reading from the N-terminus, the 134-residue chain is Small ribosomal subunit protein uS9c (134 aa).

This sequence belongs to the universal ribosomal protein uS9 family.

The protein localises to the plastid. It is found in the chloroplast. The sequence is that of Small ribosomal subunit protein uS9c (rps9) from Guillardia theta (Cryptophyte).